A 1017-amino-acid polypeptide reads, in one-letter code: Formin-binding protein 4 (1017 aa).

Disordered stretches follow at residues 1 to 141 (MGKK…STDI) and 160 to 202 (PAAP…TSGW). Ser-18 is subject to Phosphoserine. Residues 40–69 (DSTAAVPSQPAPSAATTTTTAVTAAAASDD) show a composition bias toward low complexity. Residues Ser-116 and Ser-124 each carry the phosphoserine modification. Over residues 130-141 (SKETNGNQSTDI) the composition is skewed to polar residues. Thr-172 carries the post-translational modification Phosphothreonine. A compositionally biased stretch (low complexity) spans 181–200 (AATSTLSSSTSNGTDSTQTS). The 35-residue stretch at 214–248 (GIEMGDWQEVWDENTGCYYYWNTQTNEVTWELPQY) folds into the WW 1 domain. Residue Lys-290 is modified to N6-acetyllysine. Residue Lys-301 forms a Glycyl lysine isopeptide (Lys-Gly) (interchain with G-Cter in SUMO1) linkage. Lys-335 is covalently cross-linked (Glycyl lysine isopeptide (Lys-Gly) (interchain with G-Cter in SUMO2)). Residue Lys-348 forms a Glycyl lysine isopeptide (Lys-Gly) (interchain with G-Cter in SUMO1); alternate linkage. Residue Lys-348 forms a Glycyl lysine isopeptide (Lys-Gly) (interchain with G-Cter in SUMO2); alternate linkage. Disordered stretches follow at residues 421–519 (LEEG…TTPK), 621–676 (ESQW…CKES), 706–792 (PLPL…IKRK), and 899–994 (TATI…AERN). Phosphoserine is present on residues Ser-427, Ser-432, Ser-435, Ser-438, and Ser-442. A compositionally biased stretch (polar residues) spans 428 to 442 (VSGSSPRSDISQPAS). Positions 449–458 (LMSKRGKWKM) are enriched in basic residues. Residues 461 to 474 (RATSPESTSRSSSK) show a composition bias toward low complexity. Position 464 is a phosphoserine (Ser-464). Phosphothreonine is present on Thr-479. The span at 491 to 513 (NSEKIDENSDKEMEVEESPEKIK) shows a compositional bias: basic and acidic residues. Phosphoserine is present on residues Ser-499 and Ser-508. A phosphothreonine mark is found at Thr-516 and Thr-517. Lys-519 participates in a covalent cross-link: Glycyl lysine isopeptide (Lys-Gly) (interchain with G-Cter in SUMO1); alternate. Lys-519 participates in a covalent cross-link: Glycyl lysine isopeptide (Lys-Gly) (interchain with G-Cter in SUMO2); alternate. The region spanning 595 to 629 (NATPKGWSCHWDRDHRRYFYVNEQSGESQWEFPDG) is the WW 2 domain. Acidic residues predominate over residues 627-637 (PDGEEEEEESQ). Residues 640–656 (ENRDETLAKQTLKDKTG) are compositionally biased toward basic and acidic residues. The segment covering 657-671 (TDSNSTESSETSTGS) has biased composition (low complexity). Residues 706 to 732 (PLPLEMPPPPPPPPESPPPPPPPPPPA) show a composition bias toward pro residues. Positions 733–748 (EDGEIQEVEMEDEGSE) are enriched in acidic residues. Low complexity predominate over residues 764–786 (SAQTTVVTSQSSVDSTISSSSST). Residues 904 to 925 (EPPPPPPPPPPPPPPAPKMPPP) are compositionally biased toward pro residues. Over residues 929 to 941 (KKGRKDKAKKSKT) the composition is skewed to basic residues. Positions 957 to 970 (LDEEDNSSSSEEDR) are enriched in acidic residues. Ser-963, Ser-964, and Ser-965 each carry phosphoserine. The span at 971–982 (ESTAQKRIEEWK) shows a compositional bias: basic and acidic residues.

In terms of assembly, binds FMN1. Interacts with the Arg/Gly-rich-flanked Pro-rich of KHDRBS1/SAM68. Arginine methylation in these regions has no effect on this binding. As to expression, highly expressed in the eye.

The chain is Formin-binding protein 4 (FNBP4) from Homo sapiens (Human).